Reading from the N-terminus, the 65-residue chain is MRIVYLLFPFILLLAQGAAGSSLALGKREKCLRRNGFCAFLKCPTLSVISGTCSRFQVCCKTLLG.

Positions 1 to 25 (MRIVYLLFPFILLLAQGAAGSSLAL) are cleaved as a signal peptide. Disulfide bonds link Cys-31/Cys-53, Cys-38/Cys-59, and Cys-43/Cys-60. A propeptide spanning residues 61–65 (KTLLG) is cleaved from the precursor.

It belongs to the beta-defensin family.

It is found in the secreted. Bactericidal activity; inhibits S.aureus and E.coli. This chain is Antimicrobial peptide THP1, found in Meleagris gallopavo (Wild turkey).